We begin with the raw amino-acid sequence, 205 residues long: Urease accessory protein UreE (205 aa).

The span at 178–196 (AHFHAGGHGHVHSGHGHGG) shows a compositional bias: basic residues. Positions 178–205 (AHFHAGGHGHVHSGHGHGGKHGEHDAES) are disordered.

Belongs to the UreE family.

It localises to the cytoplasm. In terms of biological role, involved in urease metallocenter assembly. Binds nickel. Probably functions as a nickel donor during metallocenter assembly. The polypeptide is Urease accessory protein UreE (Bordetella pertussis (strain Tohama I / ATCC BAA-589 / NCTC 13251)).